A 459-amino-acid polypeptide reads, in one-letter code: Argininosuccinate lyase (459 aa).

Belongs to the lyase 1 family. Argininosuccinate lyase subfamily.

It localises to the cytoplasm. The enzyme catalyses 2-(N(omega)-L-arginino)succinate = fumarate + L-arginine. The protein operates within amino-acid biosynthesis; L-arginine biosynthesis; L-arginine from L-ornithine and carbamoyl phosphate: step 3/3. This is Argininosuccinate lyase from Oceanobacillus iheyensis (strain DSM 14371 / CIP 107618 / JCM 11309 / KCTC 3954 / HTE831).